A 172-amino-acid polypeptide reads, in one-letter code: Large ribosomal subunit protein uL10 (172 aa).

This sequence belongs to the universal ribosomal protein uL10 family. In terms of assembly, part of the ribosomal stalk of the 50S ribosomal subunit. The N-terminus interacts with L11 and the large rRNA to form the base of the stalk. The C-terminus forms an elongated spine to which L12 dimers bind in a sequential fashion forming a multimeric L10(L12)X complex.

Forms part of the ribosomal stalk, playing a central role in the interaction of the ribosome with GTP-bound translation factors. The chain is Large ribosomal subunit protein uL10 from Francisella tularensis subsp. holarctica (strain FTNF002-00 / FTA).